A 556-amino-acid polypeptide reads, in one-letter code: Formate--tetrahydrofolate ligase (556 aa).

65-72 (TPAGEGKS) contributes to the ATP binding site.

Belongs to the formate--tetrahydrofolate ligase family.

It catalyses the reaction (6S)-5,6,7,8-tetrahydrofolate + formate + ATP = (6R)-10-formyltetrahydrofolate + ADP + phosphate. The protein operates within one-carbon metabolism; tetrahydrofolate interconversion. This is Formate--tetrahydrofolate ligase from Streptococcus equi subsp. equi (strain 4047).